The following is a 1227-amino-acid chain: DNA-directed RNA polymerase subunit beta (1227 aa).

The protein belongs to the RNA polymerase beta chain family. The RNAP catalytic core consists of 2 alpha, 1 beta, 1 beta' and 1 omega subunit. When a sigma factor is associated with the core the holoenzyme is formed, which can initiate transcription.

The catalysed reaction is RNA(n) + a ribonucleoside 5'-triphosphate = RNA(n+1) + diphosphate. In terms of biological role, DNA-dependent RNA polymerase catalyzes the transcription of DNA into RNA using the four ribonucleoside triphosphates as substrates. The chain is DNA-directed RNA polymerase subunit beta from Chloroflexus aurantiacus (strain ATCC 29366 / DSM 635 / J-10-fl).